The following is a 1032-amino-acid chain: Chitin synthase 8 (1032 aa).

Pro residues-rich tracts occupy residues M1 to Q11 and P26 to Q41. Positions M1–L220 are disordered. Composition is skewed to polar residues over residues M65–N78, L98–N107, and T143–Y160. N78 carries an N-linked (GlcNAc...) asparagine glycan. A compositionally biased stretch (low complexity) spans P176–P188. N215, N304, N473, N545, and N691 each carry an N-linked (GlcNAc...) asparagine glycan. The next 7 membrane-spanning stretches (helical) occupy residues T728–L748, V762–L782, S796–V816, I842–E862, F870–C890, V972–G992, and N995–F1015.

This sequence belongs to the chitin synthase family.

It is found in the cell membrane. It carries out the reaction [(1-&gt;4)-N-acetyl-beta-D-glucosaminyl](n) + UDP-N-acetyl-alpha-D-glucosamine = [(1-&gt;4)-N-acetyl-beta-D-glucosaminyl](n+1) + UDP + H(+). Polymerizes chitin, a structural polymer of the cell wall and septum, by transferring the sugar moiety of UDP-GlcNAc to the non-reducing end of the growing chitin polymer. This Cryptococcus neoformans var. grubii serotype A (strain H99 / ATCC 208821 / CBS 10515 / FGSC 9487) (Filobasidiella neoformans var. grubii) protein is Chitin synthase 8.